The primary structure comprises 554 residues: Glutamine--tRNA ligase (554 aa).

The short motif at P34–H44 is the 'HIGH' region element. ATP is bound by residues E35–N37 and H41–S47. 2 residues coordinate L-glutamine: D67 and Y212. Residues T231, R261–L262, and M269–K271 each bind ATP. The 'KMSKS' region signature appears at V268–R272. Residues T317 to E324 are interaction with tRNA.

It belongs to the class-I aminoacyl-tRNA synthetase family. In terms of assembly, monomer.

The protein localises to the cytoplasm. The enzyme catalyses tRNA(Gln) + L-glutamine + ATP = L-glutaminyl-tRNA(Gln) + AMP + diphosphate. This Escherichia coli O7:K1 (strain IAI39 / ExPEC) protein is Glutamine--tRNA ligase.